A 1802-amino-acid chain; its full sequence is U3 small nucleolar RNA-associated protein 10 (1802 aa).

One copy of the HEAT 1 repeat lies at 581–618; that stretch reads MDLQALLPFVLVTLADPSERVRREAAGILTIIGSLHKN. 2 consecutive transmembrane segments (helical) span residues 946-966 and 1002-1022; these read VQSG…AIVN and ALLL…HSVM. HEAT repeat units lie at residues 1046–1083, 1253–1290, 1297–1335, and 1758–1795; these read QTID…AFEH, LSLV…QNPE, TRML…KYGK, and ALLP…VLGE.

This sequence belongs to the HEATR1/UTP10 family. Component of the ribosomal small subunit (SSU) processome.

The protein resides in the nucleus. It localises to the nucleolus. It is found in the membrane. Its function is as follows. Involved in nucleolar processing of pre-18S ribosomal RNA. Involved in ribosome biosynthesis. The sequence is that of U3 small nucleolar RNA-associated protein 10 from Aspergillus oryzae (strain ATCC 42149 / RIB 40) (Yellow koji mold).